A 165-amino-acid chain; its full sequence is Protein SprT (165 aa).

The 144-residue stretch at Glu-20–Val-163 folds into the SprT-like domain. A Zn(2+)-binding site is contributed by His-78. Glu-79 is a catalytic residue. His-82 is a Zn(2+) binding site.

It belongs to the SprT family. Zn(2+) is required as a cofactor.

The protein resides in the cytoplasm. The polypeptide is Protein SprT (Escherichia coli O127:H6 (strain E2348/69 / EPEC)).